A 395-amino-acid polypeptide reads, in one-letter code: D-serine dehydratase (395 aa).

K46 is modified (N6-(pyridoxal phosphate)lysine). 5 residues coordinate pyridoxal 5'-phosphate: Y184, Y191, T232, G254, and N255. Zn(2+) is bound by residues H365 and C367.

Belongs to the DSD1 family. Pyridoxal 5'-phosphate serves as cofactor. It depends on Zn(2+) as a cofactor.

It catalyses the reaction D-serine = pyruvate + NH4(+). Functionally, catalyzes the conversion of D-serine to pyruvate and ammonia. Plays a role in D-serine detoxification. In Dictyostelium discoideum (Social amoeba), this protein is D-serine dehydratase.